The chain runs to 1079 residues: Error-prone DNA polymerase (1079 aa).

This sequence belongs to the DNA polymerase type-C family. DnaE2 subfamily.

It localises to the cytoplasm. It carries out the reaction DNA(n) + a 2'-deoxyribonucleoside 5'-triphosphate = DNA(n+1) + diphosphate. Functionally, DNA polymerase involved in damage-induced mutagenesis and translesion synthesis (TLS). It is not the major replicative DNA polymerase. The chain is Error-prone DNA polymerase from Ralstonia pickettii (strain 12J).